Here is a 230-residue protein sequence, read N- to C-terminus: Orotidine 5'-phosphate decarboxylase (230 aa).

Substrate-binding positions include Asp10, Lys31, 58–67 (DLKLHDIPNT), Thr117, Arg179, Gln188, Gly208, and Arg209. Lys60 (proton donor) is an active-site residue. The tract at residues 177 to 196 (GIRPKDASSDDQKRITTPED) is disordered. A compositionally biased stretch (basic and acidic residues) spans 179 to 196 (RPKDASSDDQKRITTPED).

It belongs to the OMP decarboxylase family. Type 1 subfamily. As to quaternary structure, homodimer.

It carries out the reaction orotidine 5'-phosphate + H(+) = UMP + CO2. Its pathway is pyrimidine metabolism; UMP biosynthesis via de novo pathway; UMP from orotate: step 2/2. In terms of biological role, catalyzes the decarboxylation of orotidine 5'-monophosphate (OMP) to uridine 5'-monophosphate (UMP). This chain is Orotidine 5'-phosphate decarboxylase, found in Staphylococcus saprophyticus subsp. saprophyticus (strain ATCC 15305 / DSM 20229 / NCIMB 8711 / NCTC 7292 / S-41).